Consider the following 104-residue polypeptide: Small ribosomal subunit protein bS16 (104 aa).

It belongs to the bacterial ribosomal protein bS16 family.

The chain is Small ribosomal subunit protein bS16 from Wolbachia pipientis subsp. Culex pipiens (strain wPip).